A 165-amino-acid polypeptide reads, in one-letter code: MAEIPEGANVTILNRNEKKARELISKLGLKKVPGIIRVTFRKKDNQIFAIEKPEVFRSVGGNYVVFGEAKVDNFTQRLAAAQQQAQSQTATKTPEDIQADMQAAAVANENKTEGDAAEEDVDAGDLSNDDIDLVVQQTNATKGQAIKALKEHNGDIVNAIMSLSK.

An NAC-A/B domain is found at 14–78 (NRNEKKAREL…AKVDNFTQRL (65 aa)). The UBA domain maps to 126–165 (LSNDDIDLVVQQTNATKGQAIKALKEHNGDIVNAIMSLSK).

Belongs to the NAC-alpha family. In terms of assembly, part of the nascent polypeptide-associated complex (NAC), consisting of EGD2 and EGD1. NAC associates with ribosomes via EGD1.

It is found in the cytoplasm. The protein localises to the nucleus. Its function is as follows. Component of the nascent polypeptide-associated complex (NAC), a dynamic component of the ribosomal exit tunnel, protecting the emerging polypeptides from interaction with other cytoplasmic proteins to ensure appropriate nascent protein targeting. The NAC complex also promotes mitochondrial protein import by enhancing productive ribosome interactions with the outer mitochondrial membrane and blocks the inappropriate interaction of ribosomes translating non-secretory nascent polypeptides with translocation sites in the membrane of the endoplasmic reticulum. EGD2 may also be involved in transcription regulation. The chain is Nascent polypeptide-associated complex subunit alpha (EGD2) from Candida glabrata (strain ATCC 2001 / BCRC 20586 / JCM 3761 / NBRC 0622 / NRRL Y-65 / CBS 138) (Yeast).